The chain runs to 352 residues: UDP-3-O-acylglucosamine N-acyltransferase (352 aa).

His-257 acts as the Proton acceptor in catalysis.

This sequence belongs to the transferase hexapeptide repeat family. LpxD subfamily. In terms of assembly, homotrimer.

The catalysed reaction is a UDP-3-O-[(3R)-3-hydroxyacyl]-alpha-D-glucosamine + a (3R)-hydroxyacyl-[ACP] = a UDP-2-N,3-O-bis[(3R)-3-hydroxyacyl]-alpha-D-glucosamine + holo-[ACP] + H(+). Its pathway is bacterial outer membrane biogenesis; LPS lipid A biosynthesis. In terms of biological role, catalyzes the N-acylation of UDP-3-O-acylglucosamine using 3-hydroxyacyl-ACP as the acyl donor. Is involved in the biosynthesis of lipid A, a phosphorylated glycolipid that anchors the lipopolysaccharide to the outer membrane of the cell. The chain is UDP-3-O-acylglucosamine N-acyltransferase from Methylobacterium sp. (strain 4-46).